Reading from the N-terminus, the 431-residue chain is MLNDQDRIFTNLYGMGDRSLAGAKKRGHWDGTAAIIQRGRDKIIDEMKASGLRGRGGAGFPTGMKWSFMPKESDGRPSYLVINADESEPATCKDREIMRHDPHTLIEGALIASFAMGAHAAYIYIRGEFIREREALQAAIDECYDAGLLGRNAAGSGWDFDLYLHHGAGAYICGEETALLESLEGKKGMPRMKPPFPAGAGLYGCPTTVNNVESIAVVPTILRRGAEWFASFGRPNNAGVKLFGLTGHVNTPCVVEEAMSIPMRELIEKHGGGIRGGWKNLKAVIPGGASCPVLTAEQCENAIMDYDGMRDVRSSFGTACMIVMDQSTDVVKAIWRLSKFFKHESCGQCTPCREGTGWMMRVMERLVRGDAEVEEIDMLFDVTKQVEGHTICALGDAAAWPIQGLIRNFREEIEDRIKAKRTGRMGAMAAE.

54–63 (GRGGAGFPTG) provides a ligand contact to NAD(+). Residue 167-214 (GAGAYICGEETALLESLEGKKGMPRMKPPFPAGAGLYGCPTTVNNVES) coordinates FMN. 4 residues coordinate [4Fe-4S] cluster: Cys346, Cys349, Cys352, and Cys392.

This sequence belongs to the complex I 51 kDa subunit family. NDH-1 is composed of at least 14 different subunits, Nqo1 to Nqo14. The complex has a L-shaped structure, with the hydrophobic arm (subunits Nqo7, Nqo8, Nqo10 to Nqo14) embedded in the inner membrane and the hydrophilic peripheral arm (subunits Nqo1 to Nqo6, Nqo9) protruding into the bacterial cytoplasm. The hydrophilic domain contains all the redox centers. The cofactor is FMN. It depends on [4Fe-4S] cluster as a cofactor.

The protein resides in the cell inner membrane. It catalyses the reaction a quinone + NADH + 5 H(+)(in) = a quinol + NAD(+) + 4 H(+)(out). Its function is as follows. NDH-1 shuttles electrons from NADH, via FMN and iron-sulfur (Fe-S) centers, to quinones in the respiratory chain. The immediate electron acceptor for the enzyme in this species is believed to be ubiquinone. Couples the redox reaction to proton translocation (for every two electrons transferred, four hydrogen ions are translocated across the cytoplasmic membrane), and thus conserves the redox energy in a proton gradient. This chain is NADH-quinone oxidoreductase chain 1 (nqo1), found in Paracoccus denitrificans.